The following is a 199-amino-acid chain: Segregation and condensation protein B (199 aa).

This sequence belongs to the ScpB family. In terms of assembly, homodimer. Homodimerization may be required to stabilize the binding of ScpA to the Smc head domains. Component of a cohesin-like complex composed of ScpA, ScpB and the Smc homodimer, in which ScpA and ScpB bind to the head domain of Smc. The presence of the three proteins is required for the association of the complex with DNA.

The protein resides in the cytoplasm. Its function is as follows. Participates in chromosomal partition during cell division. May act via the formation of a condensin-like complex containing Smc and ScpA that pull DNA away from mid-cell into both cell halves. The protein is Segregation and condensation protein B of Leuconostoc mesenteroides subsp. mesenteroides (strain ATCC 8293 / DSM 20343 / BCRC 11652 / CCM 1803 / JCM 6124 / NCDO 523 / NBRC 100496 / NCIMB 8023 / NCTC 12954 / NRRL B-1118 / 37Y).